A 62-amino-acid chain; its full sequence is uncharacterized protein (62 aa).

The tract at residues 17–62 is disordered; sequence YNNYNNNNNNNNNNNNNNNNNNNNNNNNNNNNNNNNNNNNNNKNNN.

This is an uncharacterized protein from Dictyostelium discoideum (Social amoeba).